We begin with the raw amino-acid sequence, 367 residues long: Protein pxr1 (367 aa).

2 disordered regions span residues 1–28 (MGLS…TDSF) and 156–336 (KALK…PMGI). Polar residues predominate over residues 15 to 27 (DPNNTKWSGNTDS). Residues 25-79 (TDSFGHRMMKSQGWTPGEYLGAKDAAHAEFHTAANASHIRVVIKDNNLGLGAKIG) enclose the G-patch domain. Residues 167–182 (SSDDSDSSSDEEEEEK) show a composition bias toward acidic residues. Basic residues-rich tracts occupy residues 209 to 221 (SKKS…SKKR), 236 to 248 (KSKK…KSKS), and 265 to 277 (KARK…KKRR). Residues 282-296 (ATAGADTEETSSTSK) show a composition bias toward low complexity. A compositionally biased stretch (basic residues) spans 297 to 309 (SSKKNSKKDKHKS). Over residues 310–328 (SSASESSTKESTPTVTESS) the composition is skewed to low complexity.

Belongs to the PINX1 family.

The protein resides in the nucleus. The protein localises to the nucleolus. Functionally, involved in rRNA-processing at A0, A1 and A2 sites and negatively regulates telomerase. In Sclerotinia sclerotiorum (strain ATCC 18683 / 1980 / Ss-1) (White mold), this protein is Protein pxr1 (pxr1).